A 296-amino-acid chain; its full sequence is Phosphatidylglycerol--prolipoprotein diacylglyceryl transferase (296 aa).

The next 4 membrane-spanning stretches (helical) occupy residues 10-30 (IAFS…LAAF), 57-77 (LLFY…MLFY), 92-112 (VWEG…ACWL), and 119-139 (LHFF…LGFG). Arg-140 is an a 1,2-diacyl-sn-glycero-3-phospho-(1'-sn-glycerol) binding site. Helical transmembrane passes span 194–214 (QLYE…TFSM), 220–240 (YALS…VEFV), and 254–274 (WLTM…ALLA).

It belongs to the Lgt family.

It localises to the cell inner membrane. It catalyses the reaction L-cysteinyl-[prolipoprotein] + a 1,2-diacyl-sn-glycero-3-phospho-(1'-sn-glycerol) = an S-1,2-diacyl-sn-glyceryl-L-cysteinyl-[prolipoprotein] + sn-glycerol 1-phosphate + H(+). Its pathway is protein modification; lipoprotein biosynthesis (diacylglyceryl transfer). Functionally, catalyzes the transfer of the diacylglyceryl group from phosphatidylglycerol to the sulfhydryl group of the N-terminal cysteine of a prolipoprotein, the first step in the formation of mature lipoproteins. The protein is Phosphatidylglycerol--prolipoprotein diacylglyceryl transferase of Xanthomonas oryzae pv. oryzae (strain MAFF 311018).